The chain runs to 302 residues: tRNA dimethylallyltransferase 1 (302 aa).

6 to 13 (GPTACGKT) provides a ligand contact to ATP. Position 8 to 13 (8 to 13 (TACGKT)) interacts with substrate. Interaction with substrate tRNA stretches follow at residues 31-34 (DSRQ) and 154-158 (QRAIR).

Belongs to the IPP transferase family. In terms of assembly, monomer. The cofactor is Mg(2+).

It catalyses the reaction adenosine(37) in tRNA + dimethylallyl diphosphate = N(6)-dimethylallyladenosine(37) in tRNA + diphosphate. Catalyzes the transfer of a dimethylallyl group onto the adenine at position 37 in tRNAs that read codons beginning with uridine, leading to the formation of N6-(dimethylallyl)adenosine (i(6)A). This is tRNA dimethylallyltransferase 1 from Porphyromonas gingivalis (strain ATCC 33277 / DSM 20709 / CIP 103683 / JCM 12257 / NCTC 11834 / 2561).